An 85-amino-acid polypeptide reads, in one-letter code: N.vectensis toxin 1 5 (85 aa).

The N-terminal stretch at 1–20 is a signal peptide; it reads MASFKIVIVCLALLVAVACA. A propeptide spanning residues 21–36 is cleaved from the precursor; that stretch reads RRRDMMSDDELDFHLS. 3 disulfide bridges follow: Cys-42/Cys-82, Cys-44/Cys-72, and Cys-65/Cys-83.

It belongs to the sea anemone sodium channel inhibitory toxin family. Type II subfamily. As to expression, expressed in ectodermal glands and in clumps outside of the extodermal layer. Is not expressed in nematocytes. In adult female tissues, shows similar expression levels in mesenteries (gametes-producing tissue), tentacles, pharynx and physa.

Its subcellular location is the secreted. Functionally, binds to site 3 of voltage-gated sodium channels and inhibits the inactivation process. Is highly active on DmNav1/TipE (drosophila) and is only extremely weakly active on rat Nav1.4-beta-1/SCN4A-SCN1B, and on human Nav1.5-beta-1/SCN5A-beta-1. This reveals high specificity for arthropod over mammalian channels. In vivo, when released into the medium, this recombinant toxin induces impaired swimming, paralysis and death of the crustacean A.nauplii within several hours. Also causes paralysis of cherry shrimps immediately after injection at very low doses. Its effect on zebrafish (D.rerio) larvae is also rapid, since it induces tail twitching accompanied by impaired swimming after 20 minutes and complete paralysis within 45 minutes. It has also been observed to cause death of zebrafish larvae within 1 hour. This chain is N.vectensis toxin 1 5, found in Nematostella vectensis (Starlet sea anemone).